The sequence spans 591 residues: Adenine deaminase (591 aa).

This sequence belongs to the metallo-dependent hydrolases superfamily. Adenine deaminase family. Homodimer. Mn(2+) serves as cofactor.

The catalysed reaction is adenine + H2O + H(+) = hypoxanthine + NH4(+). The polypeptide is Adenine deaminase (Edwardsiella ictaluri (strain 93-146)).